A 112-amino-acid chain; its full sequence is Protein Churchill (112 aa).

Zn(2+)-binding residues include C2, C5, C30, C33, H59, C61, C64, H66, H71, C88, and C91.

This sequence belongs to the Churchill family.

Functionally, transcriptional activator that mediates FGF signaling during neural development. Plays a role in the regulation of cell movement. Does not bind DNA by itself. The polypeptide is Protein Churchill (churc1) (Xenopus laevis (African clawed frog)).